Consider the following 300-residue polypeptide: MHSLKKVTFEDVAIDFTQEEWAMMDTSKRKLYRDVMLENISHLVSLGYQISKSYIILQLEQGKELWQEGREFLQDQNPDRESALKKTHMISMHPIIRKDAPTSMTMENSLILEDPFECNDSGEDCTHSSTIIQCLLTHSGKKPYVSKQCGKSLSNLLSPKPHKQIHTKGKSYQCNLCEKAYTNCFHLRRPKMTHTGERPYTCHLCRKAFTQCSHLRRHEKTHTGERPYKCHQCGKAFIQSFNLRRHERTHLGEKWYECDNSGKAFSQSSGFRGNKIIHTGEKPHACLLCGKAFSLSSDLR.

A KRAB domain is found at 7-78 (VTFEDVAIDF…GREFLQDQNP (72 aa)). A C2H2-type 1; degenerate zinc finger spans residues 172–194 (YQCNLCEKAYTNCFHLRRPKMTH). 2 consecutive C2H2-type zinc fingers follow at residues 200 to 222 (YTCH…EKTH) and 228 to 250 (YKCH…ERTH). A C2H2-type 4; degenerate zinc finger spans residues 256–278 (YECDNSGKAFSQSSGFRGNKIIH).

This sequence belongs to the krueppel C2H2-type zinc-finger protein family.

The protein localises to the nucleus. May be involved in transcriptional regulation. In Homo sapiens (Human), this protein is Putative zinc finger protein 705EP.